The chain runs to 258 residues: Pimeloyl-[acyl-carrier protein] methyl ester esterase (258 aa).

Residues W22, S84–L85, and F145–Q149 contribute to the substrate site. S84 serves as the catalytic Nucleophile. Catalysis depends on residues D209 and H238. H238 is a binding site for substrate.

The protein belongs to the AB hydrolase superfamily. Carboxylesterase BioH family. Monomer.

It localises to the cytoplasm. The catalysed reaction is 6-carboxyhexanoyl-[ACP] methyl ester + H2O = 6-carboxyhexanoyl-[ACP] + methanol + H(+). Its pathway is cofactor biosynthesis; biotin biosynthesis. Functionally, the physiological role of BioH is to remove the methyl group introduced by BioC when the pimeloyl moiety is complete. It allows to synthesize pimeloyl-ACP via the fatty acid synthetic pathway through the hydrolysis of the ester bonds of pimeloyl-ACP esters. This Pseudoalteromonas atlantica (strain T6c / ATCC BAA-1087) protein is Pimeloyl-[acyl-carrier protein] methyl ester esterase.